A 208-amino-acid chain; its full sequence is Uracil phosphoribosyltransferase (208 aa).

5-phospho-alpha-D-ribose 1-diphosphate-binding positions include R78, R103, and 130-138 (DPMLATGGS). Residues I193 and 198-200 (GDA) each bind uracil. Residue D199 coordinates 5-phospho-alpha-D-ribose 1-diphosphate.

This sequence belongs to the UPRTase family. It depends on Mg(2+) as a cofactor.

The enzyme catalyses UMP + diphosphate = 5-phospho-alpha-D-ribose 1-diphosphate + uracil. It functions in the pathway pyrimidine metabolism; UMP biosynthesis via salvage pathway; UMP from uracil: step 1/1. Its activity is regulated as follows. Allosterically activated by GTP. Its function is as follows. Catalyzes the conversion of uracil and 5-phospho-alpha-D-ribose 1-diphosphate (PRPP) to UMP and diphosphate. This Glaesserella parasuis serovar 5 (strain SH0165) (Haemophilus parasuis) protein is Uracil phosphoribosyltransferase.